The primary structure comprises 619 residues: Probable Xaa-Pro aminopeptidase P (619 aa).

Mn(2+) is bound by residues D415, D426, E524, and E538.

This sequence belongs to the peptidase M24B family. Mn(2+) serves as cofactor.

The catalysed reaction is Release of any N-terminal amino acid, including proline, that is linked to proline, even from a dipeptide or tripeptide.. In terms of biological role, catalyzes the removal of a penultimate prolyl residue from the N-termini of peptides. This Fusarium vanettenii (strain ATCC MYA-4622 / CBS 123669 / FGSC 9596 / NRRL 45880 / 77-13-4) (Fusarium solani subsp. pisi) protein is Probable Xaa-Pro aminopeptidase P (AMPP).